A 432-amino-acid polypeptide reads, in one-letter code: MVNTTIKTTKSQEIFAAAQNLMPGGVSSPVRAFKSVGGQPIVFDHVKGAYIWDVDGNQYIDYVGTWGPAICGHAHPDVIGALHDALEKGTSFGAPSFLENVLAEMVIAAVPSIEMVRFVNSGTEACMAVLRLMRAFTNREKVIKFEGCYHGHADMFLVKAGSGVATLGLPDSPGVPKSATSSTLTAPYNDLEAVKALFEENRDQIAGVILEPVVGNAGFITPDAGFLEGLRELTHEHGALLVFDEVMTGFRIAYGGAQEKFGVTPDLTTLGKVIGGGLPVGAYGGRRDIMSMIAPAGPVYQAGTLSGNPLAMTAGIKTLELLQKPGAYEYLERITKKLADGLLQVALETGHAACGGHISAMFGLFFTSGPVHNYEDAKNSDTAKFGRFHRGMLERGVYLAPSQFEAGFTSLAHTDEDIDQTIAIAREVLSSI.

Position 272 is an N6-(pyridoxal phosphate)lysine (Lys272).

The protein belongs to the class-III pyridoxal-phosphate-dependent aminotransferase family. HemL subfamily. In terms of assembly, homodimer. Pyridoxal 5'-phosphate serves as cofactor.

It is found in the cytoplasm. It carries out the reaction (S)-4-amino-5-oxopentanoate = 5-aminolevulinate. It participates in porphyrin-containing compound metabolism; protoporphyrin-IX biosynthesis; 5-aminolevulinate from L-glutamyl-tRNA(Glu): step 2/2. Its pathway is porphyrin-containing compound metabolism; chlorophyll biosynthesis. This chain is Glutamate-1-semialdehyde 2,1-aminomutase, found in Nostoc sp. (strain PCC 7120 / SAG 25.82 / UTEX 2576).